Reading from the N-terminus, the 920-residue chain is MEVQLGLGRVYPRPPSKTYRGAFQNLFQSVREVIQNPGPRHPEAASAAPPGASLLLLQQQQQQQQQQQQQQQQQQQQQQQETSPRQQQQQQGEDGSPQAHRRGPTGYLVLDEEQQPSQPQSALECHPERGCVPEPGAAVAASKGLPQQLPAPPDEDDSAAPSTLSLLGPTFPGLSSCSADLKDILSEASTMQLLQQQQQEAVSEGSSSGRAREASGAPTSSKDNYLGGTSTISDNAKELCKAVSVSMGLGVEALEHLSPGEQLRGDCMYAPLLGVPPAVRPTPCAPLAECKGSLLDDSAGKSTEDTAEYSPFKGGYTKGLEGESLGCSGSAAAGSSGTLELPSTLSLYKSGALDEAAAYQSRDYYNFPLALAGPPPPPPPPHPHARIKLENPLDYGSAWAAAAAQCRYGDLASLHGAGAAGPGSGSPSAAASSSWHTLFTAEEGQLYGPCGGGGGGGGGGGGGGGGGGGGGGGEAGAVAPYGYTRPPQGLAGQESDFTAPDVWYPGGMVSRVPYPSPTCVKSEMGPWMDSYSGPYGDMRLETARDHVLPIDYYFPPQKTCLICGDEASGCHYGALTCGSCKVFFKRAAEGKQKYLCASRNDCTIDKFRRKNCPSCRLRKCYEAGMTLGARKLKKLGNLKLQEEGEASSTTSPTEETTQKLTVSHIEGYECQPIFLNVLEAIEPGVVCAGHDNNQPDSFAALLSSLNELGERQLVHVVKWAKALPGFRNLHVDDQMAVIQYSWMGLMVFAMGWRSFTNVNSRMLYFAPDLVFNEYRMHKSRMYSQCVRMRHLSQEFGWLQITPQEFLCMKALLLFSIIPVDGLKNQKFFDELRMNYIKELDRIIACKRKNPTSCSRRFYQLTKLLDSVQPIARELHQFTFDLLIKSHMVSVDFPEMMAEIISVQVPKILSGKVKPIYFHTQ.

Residues 1 to 559 (MEVQLGLGRV…IDYYFPPQKT (559 aa)) form a modulating region. The segment at 1 to 587 (MEVQLGLGRV…GSCKVFFKRA (587 aa)) is interaction with ZNF318. Disordered stretches follow at residues 36–167 (NPGP…LSLL) and 195–228 (QQQQQEAVSEGSSSGRAREASGAPTSSKDNYLGG). Over residues 44 to 91 (AASAAPPGASLLLLQQQQQQQQQQQQQQQQQQQQQQQETSPRQQQQQQ) the composition is skewed to low complexity. At Ser-83 the chain carries Phosphoserine; by CDK9. A Phosphoserine modification is found at Ser-96. Residues 195–217 (QQQQQEAVSEGSSSGRAREASGA) show a composition bias toward low complexity. The span at 218–228 (PTSSKDNYLGG) shows a compositional bias: polar residues. Tyr-225 carries the post-translational modification Phosphotyrosine; by CSK. Residue Ser-258 is modified to Phosphoserine. Phosphotyrosine; by CSK and TNK2 is present on Tyr-269. Phosphotyrosine; by CSK is present on residues Tyr-309, Tyr-348, Tyr-359, and Tyr-364. At Tyr-365 the chain carries Phosphotyrosine; by CSK and TNK2. Lys-388 is covalently cross-linked (Glycyl lysine isopeptide (Lys-Gly) (interchain with G-Cter in SUMO)). At Tyr-395 the chain carries Phosphotyrosine; by CSK. Lys-521 participates in a covalent cross-link: Glycyl lysine isopeptide (Lys-Gly) (interchain with G-Cter in SUMO). Phosphotyrosine; by CSK is present on residues Tyr-535 and Tyr-552. Residues 552–919 (YYFPPQKTCL…GKVKPIYFHT (368 aa)) form an interaction with LPXN region. 2 NR C4-type zinc fingers span residues 560–580 (CLICGDEASGCHYGALTCGSC) and 596–620 (CASRNDCTIDKFRRKNCPSCRLRKC). The segment at residues 560-632 (CLICGDEASG…AGMTLGARKL (73 aa)) is a DNA-binding region (nuclear receptor). Residues 572-662 (YGALTCGSCK…TEETTQKLTV (91 aa)) are interaction with HIPK3. Residues 592–919 (QKYLCASRND…GKVKPIYFHT (328 aa)) are interaction with CCAR1. An interaction with KAT7 region spans residues 625–919 (MTLGARKLKK…GKVKPIYFHT (295 aa)). Position 651 is a phosphoserine; by STK4/MST1 (Ser-651). Positions 669–900 (ECQPIFLNVL…DFPEMMAEII (232 aa)) constitute an NR LBD domain. 2 residues coordinate 17beta-hydroxy-5alpha-androstan-3-one: Asn-706 and Arg-753. Glycyl lysine isopeptide (Lys-Gly) (interchain with G-Cter in ubiquitin) cross-links involve residues Lys-846 and Lys-848. Thr-878 provides a ligand contact to 17beta-hydroxy-5alpha-androstan-3-one. Tyr-916 is modified (phosphotyrosine; by CSK).

Belongs to the nuclear hormone receptor family. NR3 subfamily. Binds DNA as a homodimer. Part of a ternary complex containing AR, EFCAB6/DJBP and PARK7. Interacts with HIPK3 and NR0B2 in the presence of androgen. The ligand binding domain interacts with KAT7/HBO1 in the presence of dihydrotestosterone. Interacts with EFCAB6/DJBP, PQBP1, RANBP9, RBAK, SPDEF, SRA1, TGFB1I1 and RREB1. Interacts with ZMIZ1/ZIMP10 and ZMIZ2/ZMIP7 which both enhance its transactivation activity. Interacts with SLC30A9 and RAD54L2/ARIP4. Interacts with MACROD1 (via macro domain). Interacts via the ligand-binding domain with LXXLL and FXXLF motifs from NCOA1, NCOA2, NCOA3 and MAGEA11. Interacts (via nuclear receptor DNA binding domain and nuclear receptor ligand binding domain) with NCOA4. The AR N-terminal poly-Gln region binds Ran resulting in enhancement of AR-mediated transactivation. Ran-binding decreases as the poly-Gln length increases. Interacts with HIP1 (via coiled coil domain). Interacts (via ligand-binding domain) with TRIM68. Interacts with TNK2. Interacts with USP26. Interacts with RNF6. Interacts (regulated by RNF6 probably through polyubiquitination) with RNF14; regulates AR transcriptional activity. Interacts with PRMT2 and TRIM24. Interacts with RACK1. Interacts with RANBP10; this interaction enhances dihydrotestosterone-induced AR transcriptional activity. Interacts with PRPF6 in a hormone-independent way; this interaction enhances dihydrotestosterone-induced AR transcriptional activity. Interacts with STK4/MST1. Interacts with ZIPK/DAPK3. Interacts with LPXN. Interacts with MAK. Part of a complex containing AR, MAK and NCOA3. Interacts with CRY1. Interacts with CCAR1 and GATA2. Interacts with ZNF318. Interacts with BUD31. Interacts with ARID4A. Interacts with ARID4B. Interacts (via NR LBD domain) with ZBTB7A; the interaction is direct and androgen-dependent. Interacts with NCOR1. Interacts with NCOR2. Interacts with CRY2 in a ligand-dependent manner. Sumoylated on Lys-388 (major) and Lys-521. Ubiquitinated. Deubiquitinated by USP26. 'Lys-6' and 'Lys-27'-linked polyubiquitination by RNF6 modulates AR transcriptional activity and specificity. Post-translationally, phosphorylated in prostate cancer cells in response to several growth factors including EGF. Phosphorylation is induced by c-Src kinase (CSK). Tyr-535 is one of the major phosphorylation sites and an increase in phosphorylation and Src kinase activity is associated with prostate cancer progression. Phosphorylation by TNK2 enhances the DNA-binding and transcriptional activity and may be responsible for androgen-independent progression of prostate cancer. Phosphorylation at Ser-83 by CDK9 regulates AR promoter selectivity and cell growth. Phosphorylation by PAK6 leads to AR-mediated transcription inhibition. In terms of processing, palmitoylated by ZDHHC7 and ZDHHC21. Palmitoylation is required for plasma membrane targeting and for rapid intracellular signaling via ERK and AKT kinases and cAMP generation. As to expression, mainly expressed in heart and skeletal muscle. In terms of tissue distribution, expressed in basal and stromal cells of the prostate (at protein level).

Its subcellular location is the nucleus. The protein localises to the cytoplasm. With respect to regulation, AIM-100 (4-amino-5,6-biaryl-furo[2,3-d]pyrimidine) suppresses TNK2-mediated phosphorylation at Tyr-269. Inhibits the binding of the Tyr-269 phosphorylated form to androgen-responsive enhancers (AREs) and its transcriptional activity. Its function is as follows. Steroid hormone receptors are ligand-activated transcription factors that regulate eukaryotic gene expression and affect cellular proliferation and differentiation in target tissues. Transcription factor activity is modulated by bound coactivator and corepressor proteins like ZBTB7A that recruits NCOR1 and NCOR2 to the androgen response elements/ARE on target genes, negatively regulating androgen receptor signaling and androgen-induced cell proliferation. Transcription activation is also down-regulated by NR0B2. Activated, but not phosphorylated, by HIPK3 and ZIPK/DAPK3. In terms of biological role, lacks the C-terminal ligand-binding domain and may therefore constitutively activate the transcription of a specific set of genes independently of steroid hormones. This chain is Androgen receptor (AR), found in Homo sapiens (Human).